Reading from the N-terminus, the 486-residue chain is Bifunctional protein GlmU (486 aa).

A pyrophosphorylase region spans residues 1-241 (MSASDSSSAV…ARELAGVNDR (241 aa)). Residues 13–16 (LAAG), Lys27, Gln84, and 89–90 (GT) each bind UDP-N-acetyl-alpha-D-glucosamine. Asp114 lines the Mg(2+) pocket. The UDP-N-acetyl-alpha-D-glucosamine site is built by Gly151, Glu166, Asn181, and Asn239. Asn239 serves as a coordination point for Mg(2+). A linker region spans residues 242–262 (VQLAEAGAELNRRTVEAAMRG). The interval 263 to 486 (GATIVDPATT…AQNSVPNQEG (224 aa)) is N-acetyltransferase. Positions 344 and 362 each coordinate UDP-N-acetyl-alpha-D-glucosamine. His374 serves as the catalytic Proton acceptor. UDP-N-acetyl-alpha-D-glucosamine contacts are provided by Tyr377 and Asn388. Residues Ala391, 397 to 398 (NY), Ser416, and Ala434 contribute to the acetyl-CoA site. The segment at 464–486 (KRPGTAAADAAAAAQNSVPNQEG) is disordered.

It in the N-terminal section; belongs to the N-acetylglucosamine-1-phosphate uridyltransferase family. In the C-terminal section; belongs to the transferase hexapeptide repeat family. In terms of assembly, homotrimer. Mg(2+) is required as a cofactor.

It localises to the cytoplasm. It carries out the reaction alpha-D-glucosamine 1-phosphate + acetyl-CoA = N-acetyl-alpha-D-glucosamine 1-phosphate + CoA + H(+). The enzyme catalyses N-acetyl-alpha-D-glucosamine 1-phosphate + UTP + H(+) = UDP-N-acetyl-alpha-D-glucosamine + diphosphate. The protein operates within nucleotide-sugar biosynthesis; UDP-N-acetyl-alpha-D-glucosamine biosynthesis; N-acetyl-alpha-D-glucosamine 1-phosphate from alpha-D-glucosamine 6-phosphate (route II): step 2/2. It participates in nucleotide-sugar biosynthesis; UDP-N-acetyl-alpha-D-glucosamine biosynthesis; UDP-N-acetyl-alpha-D-glucosamine from N-acetyl-alpha-D-glucosamine 1-phosphate: step 1/1. Its pathway is bacterial outer membrane biogenesis; LPS lipid A biosynthesis. Functionally, catalyzes the last two sequential reactions in the de novo biosynthetic pathway for UDP-N-acetylglucosamine (UDP-GlcNAc). The C-terminal domain catalyzes the transfer of acetyl group from acetyl coenzyme A to glucosamine-1-phosphate (GlcN-1-P) to produce N-acetylglucosamine-1-phosphate (GlcNAc-1-P), which is converted into UDP-GlcNAc by the transfer of uridine 5-monophosphate (from uridine 5-triphosphate), a reaction catalyzed by the N-terminal domain. This is Bifunctional protein GlmU from Corynebacterium efficiens (strain DSM 44549 / YS-314 / AJ 12310 / JCM 11189 / NBRC 100395).